We begin with the raw amino-acid sequence, 448 residues long: MKLKSLIKSTSDWFSSTPERALNRAYKSALKIQEIETKHFRGQKVSRENADYGASVITYFETEVQSYLQKINMELTVFKASRLFLSLSNLQDTENNLGTGKVKSEQETTAIIIFDKLKFIDEVIAKYKSNAIEKNVSNNVAIIAASERNPEVTNSAPSGKKSTKVKDQGVKNKTINFESASQKTGVLPRSFMNTLNKIKQEIDPKSGESEEQVLTKYRKSRYRTALSIKFILLLIIIPLLIHQLTKTFFLIPVVEQYFSRHEQVIFINRDLEDEALEELQHYEETLHFRGLIGLGPELSPEKIEQEVKQKAGEITEEYRRHGIDSIANIFADLFSFIAFVLVLVNSKKEIEVVKSFLDEILYGLSDPAKAFLIILFTDMFVGFHSPHGWEVILEGVAHHFGLPENREFNFLFIATFPVILDTVLKYWIFRYLNRISPSAVATYKNMNE.

4 helical membrane passes run 231-251 (ILLL…FFLI), 323-343 (IDSI…VLVL), 372-392 (LIIL…WEVI), and 408-428 (FNFL…KYWI).

The protein belongs to the CemA family.

Its subcellular location is the cell inner membrane. In terms of biological role, required for H(+) efflux immediately after light irradiation to form a rapid H(+) concentration gradient across the thylakoid membranes. Together with PxcL, contributes to transient H(+) uptake following dark to light transition. This Rippkaea orientalis (strain PCC 8801 / RF-1) (Cyanothece sp. (strain PCC 8801)) protein is Proton extrusion protein PxcA.